Consider the following 187-residue polypeptide: Ribosome-recycling factor (187 aa).

It belongs to the RRF family.

It is found in the cytoplasm. Responsible for the release of ribosomes from messenger RNA at the termination of protein biosynthesis. May increase the efficiency of translation by recycling ribosomes from one round of translation to another. The sequence is that of Ribosome-recycling factor from Methylorubrum extorquens (strain CM4 / NCIMB 13688) (Methylobacterium extorquens).